The following is a 622-amino-acid chain: Sodium-dependent serotonin transporter (622 aa).

The disordered stretch occupies residues 1–53 (MDRSGSSDFAGAAATTGRSNPAPWSDDKESPNNEDDSNEDDGDHTTPAKVTDP). At 1–82 (MDRSGSSDFA…TRETWGQKAE (82 aa)) the chain is on the cytoplasmic side. Over residues 32–42 (NNEDDSNEDDG) the composition is skewed to acidic residues. Transmembrane regions (helical) follow at residues 83–103 (FLLA…FPYI), 111–130 (AFLV…LFYM), and 155–175 (GVGY…NTII). Na(+) is bound by residues Gly-89, Ala-91, Val-92, and Asn-96. At 176–244 (GWAVYYLFAS…NGLDFMGPVK (69 aa)) the chain is on the extracellular side. A disulfide bridge links Cys-195 with Cys-204. Asn-211 carries an N-linked (GlcNAc...) asparagine glycan. 5 helical membrane-spanning segments follow: residues 245–263 (PTLA…FSLW), 272–289 (VVWV…ILLV), 325–342 (IFFS…LSSY), 354–375 (LITS…FSVL), and 408–427 (MSGS…TLGL). 5 residues coordinate Na(+): Ser-328, Asn-360, Leu-425, Asp-428, and Ser-429. 4 helical membrane passes run 455-473 (LFVL…PTMT), 489-509 (GLAI…FYGV), 530-549 (ICWT…FSIM), and 568-586 (VGWA…YIIY). Residues 587-622 (KFFFASKGGCRQRLQESFQPEDNCGSVVPGQQGTSV) are Cytoplasmic-facing.

The protein belongs to the sodium:neurotransmitter symporter (SNF) (TC 2.A.22) family. In terms of tissue distribution, expression is specific to cell bodies in the ventral ganglion of the embryonic and larval nervous system.

It localises to the cell membrane. Terminates the action of serotonin by its high affinity sodium-dependent reuptake into presynaptic terminals. The chain is Sodium-dependent serotonin transporter (SerT) from Drosophila melanogaster (Fruit fly).